A 116-amino-acid chain; its full sequence is Transcription elongation factor SPT4 homolog 1 (116 aa).

The segment at 19–39 (CLRCRLVKTYDQFRDSGCENC) adopts a C4-type zinc-finger fold.

Belongs to the SPT4 family.

The protein localises to the nucleus. In terms of biological role, may regulate transcription elongation by RNA polymerase II. May enhance transcriptional pausing at sites proximal to the promoter, which may in turn facilitate the assembly of an elongation competent RNA polymerase II complex. In Arabidopsis thaliana (Mouse-ear cress), this protein is Transcription elongation factor SPT4 homolog 1.